Consider the following 354-residue polypeptide: Inositol-tetrakisphosphate 1-kinase 1 (354 aa).

A compositionally biased stretch (basic and acidic residues) spans 1 to 16 (MRVHEEASEDKEREVE). Residues 1–24 (MRVHEEASEDKEREVEEAPDLMPL) form a disordered region. 2 residues coordinate 1D-myo-inositol 1,3,4-trisphosphate: lysine 53 and lysine 95. Residues arginine 130 and lysine 180 each coordinate ATP. An ATP-grasp domain is found at 140–347 (LNLSNAYGEV…FLLSLVQNKY (208 aa)). Histidine 191 and lysine 223 together coordinate 1D-myo-inositol 1,3,4-trisphosphate. ATP-binding positions include 212–223 (QEFVNHGGILFK) and serine 238. 3 residues coordinate Mg(2+): aspartate 303, aspartate 318, and asparagine 320. Asparagine 320 is a binding site for 1D-myo-inositol 1,3,4-trisphosphate.

This sequence belongs to the ITPK1 family. In terms of assembly, monomer. The cofactor is Mg(2+). In terms of tissue distribution, expressed in roots, leaves, flowers, anthers and embryos.

The catalysed reaction is 1D-myo-inositol 3,4,5,6-tetrakisphosphate + ATP = 1D-myo-inositol 1,3,4,5,6-pentakisphosphate + ADP + H(+). It carries out the reaction 1D-myo-inositol 1,3,4-trisphosphate + ATP = 1D-myo-inositol 1,3,4,5-tetrakisphosphate + ADP + H(+). It catalyses the reaction 1D-myo-inositol 1,3,4-trisphosphate + ATP = 1D-myo-inositol 1,3,4,6-tetrakisphosphate + ADP + H(+). In terms of biological role, kinase that can phosphorylate various inositol polyphosphate such as Ins(3,4,5,6)P4 or Ins(1,3,4)P3 and participates in phytic acid biosynthesis in developing seeds. Phytic acid is the primary storage form of phosphorus in cereal grains and other plant seeds. The chain is Inositol-tetrakisphosphate 1-kinase 1 from Oryza sativa subsp. japonica (Rice).